The following is a 91-amino-acid chain: Methanol dehydrogenase [cytochrome c] subunit 2 (91 aa).

The first 22 residues, 1–22 (MKHVLTLLALASVFAVSNQALA), serve as a signal peptide directing secretion. C28 and C34 are joined by a disulfide.

The protein belongs to the methanol dehydrogenase subunit 2 family. In terms of assembly, heterotetramer composed of 2 alpha and 2 beta subunits.

It localises to the cell inner membrane. The enzyme catalyses 2 Fe(III)-[cytochrome cL] + a primary alcohol = 2 Fe(II)-[cytochrome cL] + an aldehyde + 2 H(+). Its function is as follows. Catalyzes the oxidation of primary alcohols including methanol. This Methylophilus methylotrophus (Bacterium W3A1) protein is Methanol dehydrogenase [cytochrome c] subunit 2 (moxI).